The sequence spans 278 residues: S-formylglutathione hydrolase YeiG (278 aa).

Catalysis depends on charge relay system residues serine 145, aspartate 223, and histidine 256.

The protein belongs to the esterase D family.

It catalyses the reaction S-formylglutathione + H2O = formate + glutathione + H(+). Its function is as follows. Serine hydrolase involved in the detoxification of formaldehyde. Hydrolyzes S-formylglutathione to glutathione and formate. The protein is S-formylglutathione hydrolase YeiG (yeiG) of Shigella boydii serotype 4 (strain Sb227).